Consider the following 347-residue polypeptide: MISEAPPFWWRKADWRAWMLAPLSFVYGRVAGHRMAHARRASVSIPVICVGNFTVGGAGKTPTALTIARAAKAKGLKPGFLSRGYGGSLDVTTVVDPHHHRAVAVGDEPLLLAQEALTVISRRRVDGAHRLVAEGADLIIMDDGFQSARLAIDYALLVIDATRGLGNGHIVPAGPVRAPIGQQLRSATALLKVGGGQAADRIVRMAARAAKPYFTASLKVRGDDRLTGIRVLAFAGIADPAKFFRTVESRGAEITVAKTFGDHEHLSEDEIGDILTTAERQDLLIVTTSKDFVRLSGHHGKAQELAQQCRVIEVDMVFDDHLAPGLIIDRAIVACRERRLREMKTKS.

Position 54–61 (54–61 (TVGGAGKT)) interacts with ATP.

Belongs to the LpxK family.

It catalyses the reaction a lipid A disaccharide + ATP = a lipid IVA + ADP + H(+). The protein operates within glycolipid biosynthesis; lipid IV(A) biosynthesis; lipid IV(A) from (3R)-3-hydroxytetradecanoyl-[acyl-carrier-protein] and UDP-N-acetyl-alpha-D-glucosamine: step 6/6. Functionally, transfers the gamma-phosphate of ATP to the 4'-position of a tetraacyldisaccharide 1-phosphate intermediate (termed DS-1-P) to form tetraacyldisaccharide 1,4'-bis-phosphate (lipid IVA). The polypeptide is Tetraacyldisaccharide 4'-kinase (Rhizobium etli (strain CIAT 652)).